Consider the following 106-residue polypeptide: UPF0145 protein PputW619_2377 (106 aa).

Belongs to the UPF0145 family.

This Pseudomonas putida (strain W619) protein is UPF0145 protein PputW619_2377.